We begin with the raw amino-acid sequence, 90 residues long: Protein LURE 1.5 (90 aa).

A signal peptide spans 1–19; that stretch reads MKLPIIFLTLLIFVSSCTS. 2 disulfide bridges follow: Cys58–Cys75 and Cys61–Cys82.

It belongs to the DEFL family. Expressed in the pistil. Detected exclusively in the synergid cells.

The protein localises to the secreted. In terms of biological role, inactive pollen tube attractants guiding pollen tubes to the ovular micropyle. In Arabidopsis thaliana (Mouse-ear cress), this protein is Protein LURE 1.5.